Reading from the N-terminus, the 605-residue chain is Elongation factor 4 (605 aa).

The tr-type G domain occupies 9–192 (SRTRNFCIIA…AIIARIPSPK (184 aa)). Residues 21–26 (DHGKST) and 139–142 (NKID) each bind GTP.

The protein belongs to the TRAFAC class translation factor GTPase superfamily. Classic translation factor GTPase family. LepA subfamily.

It is found in the cell inner membrane. It carries out the reaction GTP + H2O = GDP + phosphate + H(+). Functionally, required for accurate and efficient protein synthesis under certain stress conditions. May act as a fidelity factor of the translation reaction, by catalyzing a one-codon backward translocation of tRNAs on improperly translocated ribosomes. Back-translocation proceeds from a post-translocation (POST) complex to a pre-translocation (PRE) complex, thus giving elongation factor G a second chance to translocate the tRNAs correctly. Binds to ribosomes in a GTP-dependent manner. In Chlorobium limicola (strain DSM 245 / NBRC 103803 / 6330), this protein is Elongation factor 4.